A 212-amino-acid chain; its full sequence is Large ribosomal subunit protein uL3 (212 aa).

Gln-153 carries the N5-methylglutamine modification.

This sequence belongs to the universal ribosomal protein uL3 family. As to quaternary structure, part of the 50S ribosomal subunit. Forms a cluster with proteins L14 and L19. In terms of processing, methylated by PrmB.

One of the primary rRNA binding proteins, it binds directly near the 3'-end of the 23S rRNA, where it nucleates assembly of the 50S subunit. The sequence is that of Large ribosomal subunit protein uL3 from Marinobacter nauticus (strain ATCC 700491 / DSM 11845 / VT8) (Marinobacter aquaeolei).